A 90-amino-acid chain; its full sequence is Probable Fe(2+)-trafficking protein (90 aa).

It belongs to the Fe(2+)-trafficking protein family.

Functionally, could be a mediator in iron transactions between iron acquisition and iron-requiring processes, such as synthesis and/or repair of Fe-S clusters in biosynthetic enzymes. The polypeptide is Probable Fe(2+)-trafficking protein (Dechloromonas aromatica (strain RCB)).